We begin with the raw amino-acid sequence, 181 residues long: UPF0340 protein OB2986 (181 aa).

Belongs to the UPF0340 family.

The protein is UPF0340 protein OB2986 of Oceanobacillus iheyensis (strain DSM 14371 / CIP 107618 / JCM 11309 / KCTC 3954 / HTE831).